Consider the following 70-residue polypeptide: uncharacterized protein (70 aa).

The helical transmembrane segment at 50-70 (FYLLVFFIILWVSREAFFYLI) threads the bilayer.

The protein belongs to the M.jannaschii MJ0023/MJ0349/MJ1072/MJ1074/MJ1107/MJECL16 family.

The protein localises to the membrane. This is an uncharacterized protein from Methanocaldococcus jannaschii (strain ATCC 43067 / DSM 2661 / JAL-1 / JCM 10045 / NBRC 100440) (Methanococcus jannaschii).